Reading from the N-terminus, the 396-residue chain is Obg-like ATPase 1 (396 aa).

The OBG-type G domain maps to 23–283; that stretch reads LKIGIVGLPN…LSAEERQKYL (261 aa). 32–37 is an ATP binding site; that stretch reads NVGKST. Positions 36 and 56 each coordinate Mg(2+). Leucine 231 lines the ATP pocket. The Nuclear export signal signature appears at 267 to 274; it reads LELKLQEL. Lysine 294 is subject to N6-acetyllysine. Residues 304 to 387 form the TGS domain; sequence QLEYFFTAGP…EDGDIIFFKF (84 aa).

Belongs to the TRAFAC class OBG-HflX-like GTPase superfamily. OBG GTPase family. YchF/OLA1 subfamily. Monomer. Requires Mg(2+) as cofactor.

The protein resides in the cytoplasm. It localises to the nucleus. It is found in the nucleolus. Functionally, hydrolyzes ATP, and can also hydrolyze GTP with lower efficiency. Has lower affinity for GTP. The protein is Obg-like ATPase 1 of Pongo abelii (Sumatran orangutan).